A 268-amino-acid chain; its full sequence is 4-hydroxy-tetrahydrodipicolinate reductase (268 aa).

NAD(+) contacts are provided by residues 10 to 15 (GASGRM) and aspartate 36. Arginine 37 contacts NADP(+). Residues 99 to 101 (GTT) and 123 to 126 (SANM) contribute to the NAD(+) site. Catalysis depends on histidine 156, which acts as the Proton donor/acceptor. Histidine 157 contacts (S)-2,3,4,5-tetrahydrodipicolinate. Lysine 160 acts as the Proton donor in catalysis. A (S)-2,3,4,5-tetrahydrodipicolinate-binding site is contributed by 166–167 (GT).

It belongs to the DapB family.

Its subcellular location is the cytoplasm. It catalyses the reaction (S)-2,3,4,5-tetrahydrodipicolinate + NAD(+) + H2O = (2S,4S)-4-hydroxy-2,3,4,5-tetrahydrodipicolinate + NADH + H(+). The enzyme catalyses (S)-2,3,4,5-tetrahydrodipicolinate + NADP(+) + H2O = (2S,4S)-4-hydroxy-2,3,4,5-tetrahydrodipicolinate + NADPH + H(+). It participates in amino-acid biosynthesis; L-lysine biosynthesis via DAP pathway; (S)-tetrahydrodipicolinate from L-aspartate: step 4/4. Catalyzes the conversion of 4-hydroxy-tetrahydrodipicolinate (HTPA) to tetrahydrodipicolinate. This Burkholderia pseudomallei (strain 1710b) protein is 4-hydroxy-tetrahydrodipicolinate reductase.